A 206-amino-acid chain; its full sequence is LexA repressor (206 aa).

The H-T-H motif DNA-binding region spans 28–48; sequence RAEIATRLGFKSANAAEEHLK. Active-site for autocatalytic cleavage activity residues include S123 and K160.

Belongs to the peptidase S24 family. In terms of assembly, homodimer.

The catalysed reaction is Hydrolysis of Ala-|-Gly bond in repressor LexA.. Functionally, represses a number of genes involved in the response to DNA damage (SOS response), including recA and lexA. In the presence of single-stranded DNA, RecA interacts with LexA causing an autocatalytic cleavage which disrupts the DNA-binding part of LexA, leading to derepression of the SOS regulon and eventually DNA repair. This is LexA repressor from Shewanella sp. (strain ANA-3).